Reading from the N-terminus, the 345-residue chain is D-erythrose-4-phosphate dehydrogenase (345 aa).

11–12 (RI) is a binding site for NAD(+). Residues 158 to 160 (SCT), R204, 217 to 218 (TK), and R240 contribute to the substrate site. The active-site Nucleophile is the C159. Residue N322 participates in NAD(+) binding.

The protein belongs to the glyceraldehyde-3-phosphate dehydrogenase family. Epd subfamily. In terms of assembly, homotetramer.

It is found in the cytoplasm. It catalyses the reaction D-erythrose 4-phosphate + NAD(+) + H2O = 4-phospho-D-erythronate + NADH + 2 H(+). Its pathway is cofactor biosynthesis; pyridoxine 5'-phosphate biosynthesis; pyridoxine 5'-phosphate from D-erythrose 4-phosphate: step 1/5. In terms of biological role, catalyzes the NAD-dependent conversion of D-erythrose 4-phosphate to 4-phosphoerythronate. The protein is D-erythrose-4-phosphate dehydrogenase of Vibrio parahaemolyticus serotype O3:K6 (strain RIMD 2210633).